The chain runs to 1075 residues: MAEDDAEKAFFEAQAMNAGSMGYNGAEDQNANASDSDEYDPSSTLQDQYPAPSENLQLQETDTPTSVSQPQPSFREDADPAGNAHPSQPPSRPESQASTSVPATGVSVQPKTRTIGGFVVEDEDEDDAGDADYEPPAVLGVEDMNIIPSQPIPGNANEATSTPDVSLDEAAQESASAKNVPNSSLSSVSLAFKNDGSMDLGQNLYNSRTSLQPEIARESATATPAPDSPSTAKGRLPHDRVGILEDRIREDPRGDIPAWLELINEHRSRNRIDSARDVYERFLKVFPLSAEMWVAYATMESELNELFRLEQIFNRTLLTIPAVQLWTVYLDYVRRRNPLSTDTTGQARKVISSAYELALQHIGMDKESGSIWADYIQFIRSGPGNVGGSGWQDQQKMDLLRKAYQRAICVPMQAVNTLWKEYDQFEMGLNKLTGRKFLQEQSPSYMTARSSYTELQNFTRDLNRTTLPRLPPVPGSEGDFEYLQQIEIWKRWINWEKGDPLVLKEDDLTAYKGRVVYVYKQALMALRFLPEIWFEAADFCFLNDMETEGNEFLKNGIDANPESCLLAFKRADRLEITSESEQDPIKRGAKVREPYDRLLDALYDLIAKARTREAQDVARLEETFKLRPDTQPAANDDDDDDQSETKAKESVKNAQIEAVRHAHSIQIGILSKTVSFAWIALMRAMRRIQGKGKPGEVPGSRQVFADARKRGRITSDVYIASALIEYHCYKDPAATKIFERGAKLFPEDENFALEYLKHLIDINDIINARAVFEMTVRKLAANPENVHKTKPIFAFLHEYESRYGDLVQVINLETRMRELFPDDPTLEQFAHRFSAPNFDPTTFRPIISPSQTRPKTVYPGGQVPSRHGTPSSRFPEASVTNSPKRPLEDFDDDMSRPRKFVRGESPLRTTTQRRQLDQQKRTQTALQVPSSGSQYRSQGSPAPLPRDIVYLLSVIPPASTYTAGRFSAEKMIDLVRRLDLPASISQIPLPQSARGLGTGQTTIGGQQFSDDGGYYYKGGVVDMCALHFMDDGVFRLYVAGLAGNILARILFFGSGGLLAYLLRTVQIWDPEIPRR.

Disordered regions lie at residues 20 to 185 and 215 to 237; these read SMGY…NSSL and IARE…GRLP. Composition is skewed to polar residues over residues 54–72 and 93–112; these read ENLQ…QPQP and PESQ…QPKT. Residues 120–133 show a composition bias toward acidic residues; it reads VEDEDEDDAGDADY. HAT repeat units follow at residues 270–302, 304–335, 346–381, 395–428, 465–498, and 510–542; these read NRID…MESE, NELF…YVRR, QARK…FIRS, QKMD…FEMG, TTLP…WEKG, and AYKG…FCFL. Disordered stretches follow at residues 621 to 653 and 840 to 941; these read EETF…SVKN and PTTF…QGSP. The segment covering 868–883 has biased composition (polar residues); sequence GTPSSRFPEASVTNSP. Basic and acidic residues predominate over residues 885–896; that stretch reads RPLEDFDDDMSR. Positions 925–940 are enriched in polar residues; that stretch reads ALQVPSSGSQYRSQGS.

The protein localises to the nucleus. Its subcellular location is the cytoplasm. Component of the cleavage factor IA (CFIA) complex, which is involved in the endonucleolytic cleavage during polyadenylation-dependent pre-mRNA 3'-end formation. The chain is mRNA 3'-end-processing protein rna14 (rna14) from Emericella nidulans (strain FGSC A4 / ATCC 38163 / CBS 112.46 / NRRL 194 / M139) (Aspergillus nidulans).